An 822-amino-acid chain; its full sequence is MGVQKDSRDIRWNRTTRPLALLLCGLLAFSALSCARTLPEGRKANLAELVSEEEEHFLLDPGNALRLFCDTNQTTIVNWYTESTRLQHGGRIRLTDTVLEIADVTYEDSGLYLCVVPGTGHILRNFTISVVDSLASGDDDDEDHGREDSAGDMGEDPPYSTSYRAPFWSQPQRMDKKLYAVPAGNTVKFRCPSAGNPTPGIRWLKNGREFGGEHRIGGIRLRHQHWSLVMESVVPSDRGNYTCLVENKFGSISYSYLLDVLERSPHRPILQAGLPANTTAMLGSDVQFFCKVYSDAQPHIQWLKHIEVNGSRYGPDGVPFVQVLKTADINSSEVEVLYLHNVSFEDAGEYTCLAGNSIGLSYQSAWLTVLPEEDFAKEAEGPETRYTDIIIYTSGSLALLMAAVIVVLCRMQLPPTKTHLEPATVHKLSRFPLMRQFSLESSSSGKSSTSLVRVTRLSSSCTPMLPGVLEFDLPLDSKWEFPRERLVLGKPLGEGCFGQVVRAEAYGINKDQPDKAITVAIKIVKDKGTDKELSDLISEMELMKLMGKHKNIINLLGVCTQDGPLYMIVEYASKGNLREFLRARRPPSPDYTFDMTKVPEEQLSFQDLVSCSYQVARGMAYLESKRCIHRDLAARNVLVTGENVMKIADFGLARGVHDIDYYKKTSNGRLPVKWMAPEALFDRVYTHQSDVWSFGVLTWEIFTLGGSPYPGIPVEELFKLLREGHRMDKPSNCTHELYMLMRECWHAAPSQRPTFKQLVETLDRILATVAEEYLDLSMPFEQYSPACEDTTSTCSSDDSVFTHEPDVPSLFTHHTTTSMVGT.

The signal sequence occupies residues 1–35 (MGVQKDSRDIRWNRTTRPLALLLCGLLAFSALSCA). Residues Asn-13, Asn-72, and Asn-125 are each glycosylated (N-linked (GlcNAc...) asparagine). Topologically, residues 36–388 (RTLPEGRKAN…AEGPETRYTD (353 aa)) are extracellular. 3 consecutive Ig-like C2-type domains span residues 39–129 (PEGR…FTIS), 157–259 (PPYS…YLLD), and 268–368 (PILQ…AWLT). Residues Cys-69 and Cys-114 are joined by a disulfide bond. A disordered region spans residues 136 to 166 (SGDDDDEDHGREDSAGDMGEDPPYSTSYRAP). Cys-191 and Cys-243 are joined by a disulfide. Residues Asn-240, Asn-277, Asn-309, Asn-330, and Asn-341 are each glycosylated (N-linked (GlcNAc...) asparagine). A disulfide bond links Cys-290 and Cys-352. A helical transmembrane segment spans residues 389–409 (IIIYTSGSLALLMAAVIVVLC). Residues 410–822 (RMQLPPTKTH…HHTTTSMVGT (413 aa)) lie on the Cytoplasmic side of the membrane. The 289-residue stretch at 486 to 774 (LVLGKPLGEG…ILATVAEEYL (289 aa)) folds into the Protein kinase domain. ATP-binding positions include 492–500 (LGEGCFGQV) and Lys-522. Asp-631 functions as the Proton acceptor in the catalytic mechanism. 3 positions are modified to phosphotyrosine; by autocatalysis: Tyr-661, Tyr-662, and Tyr-773.

Belongs to the protein kinase superfamily. Tyr protein kinase family. Fibroblast growth factor receptor subfamily. Ubiquitinated. Subject to proteasomal degradation when not fully glycosylated. Post-translationally, autophosphorylated. Binding of FGF family members together with heparan sulfate proteoglycan or heparin promotes receptor dimerization and autophosphorylation on tyrosine residues. Autophosphorylation occurs in trans between the two FGFR molecules present in the dimer.

The protein localises to the cell membrane. Its subcellular location is the endosome. The protein resides in the endoplasmic reticulum. It carries out the reaction L-tyrosyl-[protein] + ATP = O-phospho-L-tyrosyl-[protein] + ADP + H(+). Its activity is regulated as follows. Present in an inactive conformation in the absence of bound ligand. Ligand binding leads to dimerization and activation by autophosphorylation on tyrosine residues. Tyrosine-protein kinase that acts as a cell-surface receptor for fibroblast growth factors and plays a role in the regulation of cell proliferation, differentiation and migration, and in regulation of lipid metabolism, bile acid biosynthesis, glucose uptake, vitamin D metabolism and phosphate homeostasis. Required for normal down-regulation of the expression of CYP7A1, the rate-limiting enzyme in bile acid synthesis, in response to FGF19. Phosphorylates PLCG1 and FRS2. Ligand binding leads to the activation of several signaling cascades. Activation of PLCG1 leads to the production of the cellular signaling molecules diacylglycerol and inositol 1,4,5-trisphosphate. Phosphorylation of FRS2 triggers recruitment of GRB2, GAB1, PIK3R1 and SOS1, and mediates activation of RAS, MAPK1/ERK2, MAPK3/ERK1 and the MAP kinase signaling pathway, as well as of the AKT1 signaling pathway. The sequence is that of Fibroblast growth factor receptor 4 (FGFR4) from Pleurodeles waltl (Iberian ribbed newt).